The sequence spans 154 residues: Transcriptional repressor NrdR (154 aa).

Residues 3–34 (CPFCRHPDSRVVDSREADEGQAIRRRRSCPEC) fold into a zinc finger. The ATP-cone domain maps to 46–136 (LSVVKRSGVT…VYRSFSSAED (91 aa)).

It belongs to the NrdR family. It depends on Zn(2+) as a cofactor.

In terms of biological role, negatively regulates transcription of bacterial ribonucleotide reductase nrd genes and operons by binding to NrdR-boxes. In Rhodococcus jostii (strain RHA1), this protein is Transcriptional repressor NrdR.